A 181-amino-acid chain; its full sequence is Probable cobalt-precorrin-6B C(15)-methyltransferase (decarboxylating) (181 aa).

S-adenosyl-L-methionine-binding positions include Thr16, 40–44, Asp61, and Ala89; that span reads GCGSG.

It belongs to the methyltransferase superfamily. Archaeal-type CbiT family.

It carries out the reaction Co-precorrin-6B + S-adenosyl-L-methionine = Co-precorrin-7 + S-adenosyl-L-homocysteine + CO2. The protein operates within cofactor biosynthesis; adenosylcobalamin biosynthesis; cob(II)yrinate a,c-diamide from sirohydrochlorin (anaerobic route): step 8/10. Functionally, catalyzes the methylation of C-15 in cobalt-precorrin-6B followed by the decarboxylation of C-12 to form cobalt-precorrin-7. The protein is Probable cobalt-precorrin-6B C(15)-methyltransferase (decarboxylating) of Methanococcus maripaludis (strain C7 / ATCC BAA-1331).